Consider the following 483-residue polypeptide: ATP synthase subunit beta (483 aa).

162 to 169 (GGAGVGKT) is a binding site for ATP.

The protein belongs to the ATPase alpha/beta chains family. As to quaternary structure, F-type ATPases have 2 components, CF(1) - the catalytic core - and CF(0) - the membrane proton channel. CF(1) has five subunits: alpha(3), beta(3), gamma(1), delta(1), epsilon(1). CF(0) has four main subunits: a(1), b(1), b'(1) and c(9-12).

It localises to the cellular thylakoid membrane. The enzyme catalyses ATP + H2O + 4 H(+)(in) = ADP + phosphate + 5 H(+)(out). Its function is as follows. Produces ATP from ADP in the presence of a proton gradient across the membrane. The catalytic sites are hosted primarily by the beta subunits. The chain is ATP synthase subunit beta from Prochloron didemni.